We begin with the raw amino-acid sequence, 810 residues long: Sister chromatid cohesion 1 protein 2 (810 aa).

Disordered stretches follow at residues 200 to 244, 273 to 315, and 606 to 626; these read RDTT…LLEP, SHES…SECG, and MGASSTTSGTAHQTENAAETP. Composition is skewed to basic and acidic residues over residues 220–234 and 273–310; these read EPSRDHQNASRHRED and SHESSGDNLHRDGHTENLESEKTSKKTSCEEMQHDRSL. The span at 606–622 shows a compositional bias: polar residues; it reads MGASSTTSGTAHQTENA.

It belongs to the rad21 family. As to quaternary structure, component of the cohesin complex. In terms of tissue distribution, low expression in shoots, buds, siliques, leaves and roots. Found in, but not limited to, actively dividing cells: in procambium, protoderm and ground meristem in roots, and in shoot and floral meristems.

The protein resides in the nucleus. Functionally, may be involved in sister chromatid cohesion during mitosis. This is Sister chromatid cohesion 1 protein 2 (SYN2) from Arabidopsis thaliana (Mouse-ear cress).